Here is a 292-residue protein sequence, read N- to C-terminus: Phosphatidylglycerol--prolipoprotein diacylglyceryl transferase (292 aa).

Transmembrane regions (helical) follow at residues 18 to 38 (LFGVTFALRWYALAYIAGLLI), 67 to 87 (LLTWVILGVILGGRLGFVLFY), and 105 to 125 (GGMSFHGGFLGVMTALVAFCL). Residue Arg150 coordinates a 1,2-diacyl-sn-glycero-3-phospho-(1'-sn-glycerol). 3 consecutive transmembrane segments (helical) span residues 193–213 (QIYEAGLEGILLFAVLSLLVW), 222–242 (GSVSGMFLAGYGATRFLVEFV), and 266–286 (GLTMGQILSLPMILLGLYLIL).

It belongs to the Lgt family.

The protein localises to the cell inner membrane. It catalyses the reaction L-cysteinyl-[prolipoprotein] + a 1,2-diacyl-sn-glycero-3-phospho-(1'-sn-glycerol) = an S-1,2-diacyl-sn-glyceryl-L-cysteinyl-[prolipoprotein] + sn-glycerol 1-phosphate + H(+). The protein operates within protein modification; lipoprotein biosynthesis (diacylglyceryl transfer). Functionally, catalyzes the transfer of the diacylglyceryl group from phosphatidylglycerol to the sulfhydryl group of the N-terminal cysteine of a prolipoprotein, the first step in the formation of mature lipoproteins. In Cereibacter sphaeroides (strain ATCC 17029 / ATH 2.4.9) (Rhodobacter sphaeroides), this protein is Phosphatidylglycerol--prolipoprotein diacylglyceryl transferase.